The primary structure comprises 395 residues: Probable sugar efflux transporter (395 aa).

The next 12 membrane-spanning stretches (helical) occupy residues 13–33 (VVSL…PVAL), 48–68 (VGLI…PCML), 82–102 (IFIL…YWVL), 107–127 (IGVA…VVRL), 134–154 (AQAL…GLPL), 168–188 (FVLI…LLPV), 207–227 (PALL…FTAY), 244–264 (FTTI…MLFS), 272–292 (AGFL…LLPL), 297–317 (WSLS…SLGM), 331–351 (VAMA…ALLG), and 363–383 (IGYM…FTFV).

Belongs to the major facilitator superfamily. SotB (TC 2.A.1.2) family.

The protein resides in the cell inner membrane. Its function is as follows. Involved in the efflux of sugars. The physiological role may be the reduction of the intracellular concentration of toxic sugars or sugar metabolites. This is Probable sugar efflux transporter from Pectobacterium atrosepticum (strain SCRI 1043 / ATCC BAA-672) (Erwinia carotovora subsp. atroseptica).